The sequence spans 245 residues: Complement C1q subcomponent subunit A (245 aa).

The first 22 residues, 1–22 (METSQGWLVACVLTMTLVWTVA), serve as a signal peptide directing secretion. Residues 28 to 114 (APNGKDGAPG…NPGNIRDQPR (87 aa)) are disordered. The Collagen-like domain maps to 31–109 (GKDGAPGNPG…KGVKGNPGNI (79 aa)). 4-hydroxyproline occurs at positions 39 and 45. The residue at position 48 (lysine 48) is a 5-hydroxylysine. Residue lysine 48 is glycosylated (O-linked (Gal...) hydroxylysine; alternate). 4-hydroxyproline is present on proline 54. A 5-hydroxylysine modification is found at lysine 67. Lysine 67 carries an O-linked (Gal...) hydroxylysine; alternate glycan. Proline 79 and proline 85 each carry 4-hydroxyproline. The span at 79–99 (PGNVGLPGPSGPLGDSGPQGL) shows a compositional bias: low complexity. The residue at position 100 (lysine 100) is a 5-hydroxylysine. Residue lysine 100 is glycosylated (O-linked (Gal...) hydroxylysine; alternate). The C1q domain occupies 110–245 (RDQPRPAFSA…FSGFLIFPSA (136 aa)). N-linked (GlcNAc...) asparagine glycosylation occurs at asparagine 146. Residue glutamine 199 participates in Ca(2+) binding.

In terms of assembly, core component of the complement C1 complex, a calcium-dependent complex composed of 1 molecule of the C1Q subcomplex, 2 molecules of C1R and 2 molecules of C1S. The C1Q subcomplex is composed 18 subunits: 3 chains of C1QA, C1QB, and C1QC trimerize to form 6 collagen-like triple helices connected to six globular ligand-recognition modules (C1q domain). Interacts with CR1 (via Sushi 24 and Sushi 25 domains). Interacts (via C-terminus) with CD33; this interaction activates CD33 inhibitory motifs. Post-translationally, O-linked glycans are assumed to be the Glc-Gal disaccharides typically found as secondary modifications of hydroxylated lysines in collagen-like domains.

It is found in the secreted. The protein localises to the cell surface. Its activity is regulated as follows. The C1Q subcomplex is inhibited by sulfated molecules, such as triterpenoid sulfates, heparan sulfate, or chondroitin sulfates. Core component of the complement C1 complex, a multiprotein complex that initiates the classical pathway of the complement system, a cascade of proteins that leads to phagocytosis and breakdown of pathogens and signaling that strengthens the adaptive immune system. The classical complement pathway is initiated by the C1Q subcomplex of the C1 complex, which specifically binds IgG or IgM immunoglobulins complexed with antigens, forming antigen-antibody complexes on the surface of pathogens: C1QA, together with C1QB and C1QC, specifically recognizes and binds the Fc regions of IgG or IgM via its C1q domain. Immunoglobulin-binding activates the proenzyme C1R, which cleaves C1S, initiating the proteolytic cascade of the complement system. The C1Q subcomplex is activated by a hexamer of IgG complexed with antigens, while it is activated by a pentameric IgM. The C1Q subcomplex also recognizes and binds phosphatidylserine exposed on the surface of cells undergoing programmed cell death, possibly promoting activation of the complement system. The polypeptide is Complement C1q subcomponent subunit A (Mus musculus (Mouse)).